The sequence spans 195 residues: Probable GTP-binding protein EngB (195 aa).

In terms of domain architecture, EngB-type G spans 24–195; that stretch reads ELPEIALAGR…EAWDAILEKL (172 aa). GTP-binding positions include 32–39, 59–63, 77–80, 144–147, and 176–178; these read GRSNVGKS, GKTQL, DVPG, TKAD, and FSS. Mg(2+) is bound by residues Ser-39 and Thr-61.

It belongs to the TRAFAC class TrmE-Era-EngA-EngB-Septin-like GTPase superfamily. EngB GTPase family. It depends on Mg(2+) as a cofactor.

Necessary for normal cell division and for the maintenance of normal septation. The polypeptide is Probable GTP-binding protein EngB (Streptococcus pneumoniae (strain Hungary19A-6)).